The sequence spans 749 residues: Disintegrin and metalloproteinase domain-containing protein 10 (749 aa).

The signal sequence occupies residues 1 to 19 (MVLPTVLILLLSWAAGLGG). The propeptide occupies 20 to 214 (QYGNPLNKYI…SGPELLRKKR (195 aa)). Topologically, residues 20-673 (QYGNPLNKYI…SPQLYENIAE (654 aa)) are extracellular. Residues 171–178 (GGCADHSV) carry the Cysteine switch motif. Residue C173 coordinates Zn(2+). Residues 221 to 457 (NTCQLYIQTD…KRNNCFVESG (237 aa)) enclose the Peptidase M12B domain. 17 disulfides stabilise this stretch: C223–C314, C345–C452, C400–C436, C461–C496, C472–C485, C474–C480, C484–C516, C504–C512, C511–C537, C525–C544, C531–C563, C556–C568, C573–C599, C581–C608, C583–C598, C595–C640, and C633–C646. N-linked (GlcNAc...) asparagine glycosylation is found at N268 and N279. H384 contributes to the Zn(2+) binding site. Residue E385 is part of the active site. 2 residues coordinate Zn(2+): H388 and H394. Residue N440 is glycosylated (N-linked (GlcNAc...) asparagine). Positions 458–552 (QPICGNGMVE…LCPASDPKPN (95 aa)) constitute a Disintegrin domain. The N-linked (GlcNAc...) asparagine glycan is linked to N552. Residues 674–694 (WIVAHWWAVLLMGIALIMLMA) form a helical membrane-spanning segment. Residues 695–749 (GFIKICSVHTPSSNPKLPPPKPLPGTLKRRRPPQPIQQPPRQRPRESYQMGHMRR) are Cytoplasmic-facing. The interval 705–749 (PSSNPKLPPPKPLPGTLKRRRPPQPIQQPPRQRPRESYQMGHMRR) is disordered. The SH3-binding signature appears at 709–716 (PKLPPPKP). At T720 the chain carries Phosphothreonine. An SH3-binding motif is present at residues 723–729 (RRRPPQP). The interaction with AP2A1, AP2A2 and AP2M1 stretch occupies residues 735 to 749 (RQRPRESYQMGHMRR).

In terms of assembly, forms a ternary EFNA5-EPHA3-ADAM10 complex mediating EFNA5 extracellular domain shedding by ADAM10 which regulates the EFNA5-EPHA3 complex internalization and function, the cleavage occurs in trans, with ADAM10 and its substrate being on the membranes of opposing cells. Interacts with the clathrin adapter AP2 complex subunits AP2A1, AP2A2, AP2B1, and AP2M1; this interaction facilitates ADAM10 endocytosis from the plasma membrane during long-term potentiation in hippocampal neurons. Forms a ternary complex composed of ADAM10, EPHA4 and CADH1; within the complex, ADAM10 cleaves CADH1 which disrupts adherens junctions. Interacts with EPHA2. Interacts with NGF in a divalent cation-dependent manner. Interacts with TSPAN14; the interaction promotes ADAM10 maturation and cell surface expression. Interacts with TSPAN5, TSPAN10, TSPAN14, TSPAN15, TSPAN17 and TSPAN33; these interactions regulate ADAM10 substrate specificity, endocytosis and turnover. Interacts (via extracellular domain) with TSPAN33 (via extracellular domain) and (via cytoplasmic domain) with AFDN; interaction with TSPAN33 allows the docking of ADAM10 to zonula adherens through a PDZ11-dependent interaction between TSPAN33 and PLEKHA7 while interaction with AFDN locks ADAM10 at zonula adherens. Interacts with DLG1; this interaction recruits ADAM10 to the cell membrane during long-term depression in hippocampal neurons. Interacts (via extracellular domain) with BACE1 (via extracellular domain). Interacts with FAM171A1. It depends on Zn(2+) as a cofactor. The precursor is cleaved by furin and PCSK7. As to expression, expressed in the brain, specifically in neurons and astrocytes (at protein level). Expressed in inner and outer pillar cells of the organ of Corti (at protein level). Expressed in kidney and lung.

It localises to the cell membrane. The protein localises to the golgi apparatus membrane. It is found in the cytoplasmic vesicle. Its subcellular location is the clathrin-coated vesicle. The protein resides in the cell projection. It localises to the axon. The protein localises to the dendrite. It is found in the cell junction. Its subcellular location is the adherens junction. The protein resides in the cytoplasm. It catalyses the reaction Endopeptidase of broad specificity.. Its activity is regulated as follows. Catalytically inactive when the propeptide is intact and associated with the mature enzyme. The disintegrin and cysteine-rich regions modulate access of substrates to exerts an inhibitory effect on the cleavage of ADAM10 substrates. Its function is as follows. Transmembrane metalloprotease which mediates the ectodomain shedding of a myriad of transmembrane proteins, including adhesion proteins, growth factor precursors and cytokines being essential for development and tissue homeostasis. Associates with six members of the tetraspanin superfamily TspanC8 which regulate its exit from the endoplasmic reticulum and its substrate selectivity. Cleaves the membrane-bound precursor of TNF-alpha to its mature soluble form. Responsible for the proteolytical release of soluble JAM3 from endothelial cells surface. Responsible for the proteolytic release of several other cell-surface proteins, including heparin-binding epidermal growth-like factor, ephrin-A2, CD44, CDH2 and for constitutive and regulated alpha-secretase cleavage of amyloid precursor protein (APP) at '687-Lys-|-Leu-688'. Contributes to the normal cleavage of the cellular prion protein. Involved in the cleavage of the adhesion molecule L1 at the cell surface and in released membrane vesicles, suggesting a vesicle-based protease activity. Also controls the proteolytic processing of Notch and mediates lateral inhibition during neurogenesis. Required for the development of type 1 transitional B cells into marginal zone B cells, probably by cleaving Notch. Responsible for the FasL ectodomain shedding and for the generation of the remnant ADAM10-processed FasL (FasL APL) transmembrane form. Also cleaves the ectodomain of the integral membrane proteins CORIN and ITM2B. Mediates the proteolytic cleavage of LAG3, leading to release the secreted form of LAG3. Mediates the proteolytic cleavage of IL6R and IL11RA, leading to the release of secreted forms of IL6R and IL11RA. Enhances the cleavage of CHL1 by BACE1. Cleaves NRCAM. Cleaves TREM2, resulting in shedding of the TREM2 ectodomain. Involved in the development and maturation of glomerular and coronary vasculature. During development of the cochlear organ of Corti, promotes pillar cell separation by forming a ternary complex with CADH1 and EPHA4 and cleaving CADH1 at adherens junctions. May regulate the EFNA5-EPHA3 signaling. This Mus musculus (Mouse) protein is Disintegrin and metalloproteinase domain-containing protein 10 (Adam10).